The chain runs to 434 residues: Protein maelstrom homolog (434 aa).

Residues 4 to 73 constitute a DNA-binding region (HMG box); that stretch reads RRGSRNAYYF…AQGKDAGPWE (70 aa). Positions 357 to 387 are disordered; it reads SHFSSSNQEQRSNTPTGDYPSGVKISGQSSS. Positions 363 to 372 are enriched in polar residues; it reads NQEQRSNTPT.

It belongs to the maelstrom family. As to quaternary structure, interacts with SMARCB1, SIN3B and DDX4. Interacts with piRNA-associated proteins TDRD1, PIWIL1 and PIWIL2. Interacts with TEX19.

The protein resides in the cytoplasm. It localises to the nucleus. Its function is as follows. Plays a central role during spermatogenesis by repressing transposable elements and preventing their mobilization, which is essential for the germline integrity. Acts via the piRNA metabolic process, which mediates the repression of transposable elements during meiosis by forming complexes composed of piRNAs and Piwi proteins and governs the methylation and subsequent repression of transposons. Its association with piP-bodies suggests a participation in the secondary piRNAs metabolic process. Required for the localization of germ-cell factors to the meiotic nuage. The polypeptide is Protein maelstrom homolog (MAEL) (Sus scrofa (Pig)).